A 245-amino-acid polypeptide reads, in one-letter code: Lytic switch protein BZLF1 (245 aa).

Positions 1 to 167 (MMDPNSTSED…RTRKPLQPES (167 aa)) are transactivation. Phosphothreonine occurs at positions 14 and 159. The disordered stretch occupies residues 145–167 (GAPQPAPAAAPARRTRKPLQPES). A Bipartite nuclear localization signal motif is present at residues 157-194 (RRTRKPLQPESLEECDSELEIKRYKNRVASRKCRAKFK). Phosphoserine is present on residues Ser167, Ser173, and Ser186. Positions 178–195 (KRYKNRVASRKCRAKFKH) are basic motif. The 51-residue stretch at 178–228 (KRYKNRVASRKCRAKFKHLLQHYREVASAKSSENDRLRLLLKQMCPSLDVD) folds into the bZIP domain. The segment at 196-228 (LLQHYREVASAKSSENDRLRLLLKQMCPSLDVD) is leucine-zipper. The accessory activation domain stretch occupies residues 229 to 245 (SIIPRTPDVLHEDLLNF).

This sequence belongs to the bZIP family. Homodimer. Interacts (via b-ZIP domain) with the DNA polymerase processivity factor BMRF1 (via N-terminus); this interaction may inhibit BZLF1-induced transcription of the BMRF1 promoter. Interacts with human UBN1, CRTC2 and RACK1. Interacts (via N-terminus) with human PAX5 (via N-terminus); this interaction inhibits BZLF1-mediated lytic viral reactivation. Interacts (via leucine-zipper domain) with host CEBPA; this interaction induces G1 host cell cycle arrest. Interacts (via C-terminus) with host TP53BP1 (via C-terminus); this interaction is involved in the activation of the viral lytic cycle. Interacts with host chromatin-remodeling ATPase INO80; this interaction participates to the activation of early lytic viral genes by BZLF1. Interacts with host regulator of chromatin SMARCA5/hSNF2H; this interaction participates to the activation of early lytic viral genes by BZLF1. Interacts with host PLSCR1/Phospholipid scramblase 1; this interaction negatively regulates the transcriptional regulatory activity of BZLF1 by preventing the formation of the BZLF1-CBP complex.

It is found in the host nucleus. Functionally, transcription factor that acts as a molecular switch to induce the transition from the latent to the lytic or productive phase of the virus cycle. Mediates the switch from the latent to the lytic cycle of infection in cells containing a highly methylated viral genome. Probably binds to silenced chromatin and recruits host chromatin-remodeling enzymes. Regulates this switch by binding to 2 types of ZEBRA response elements (ZREs): the CpG-free AP-1 like elements (latency) and the methylated CpG-containing elements (lytic replication). Activates preferentially the methylated forms of the viral lytic R (BRLF1) and Na (BRRF1) gene promoters, the latters being the first genes activated during Z-mediated reactivation in latently infected cells. BZLF1 and BRLF1 act together to trigger lytic replication. Also binds the lytic origin of replication, oriLyt. Induces G1 cell cycle arrest by stabilizing the host CCAAT/enhancer binding protein CEBPA. This function is important because the lytic cycle preferentially takes place in host cells arrested in G1. The protein is Lytic switch protein BZLF1 of Homo sapiens (Human).